The primary structure comprises 238 residues: Ribonuclease PH (238 aa).

Phosphate contacts are provided by residues R86 and 124–126 (GTR).

Belongs to the RNase PH family. In terms of assembly, homohexameric ring arranged as a trimer of dimers.

The catalysed reaction is tRNA(n+1) + phosphate = tRNA(n) + a ribonucleoside 5'-diphosphate. In terms of biological role, phosphorolytic 3'-5' exoribonuclease that plays an important role in tRNA 3'-end maturation. Removes nucleotide residues following the 3'-CCA terminus of tRNAs; can also add nucleotides to the ends of RNA molecules by using nucleoside diphosphates as substrates, but this may not be physiologically important. Probably plays a role in initiation of 16S rRNA degradation (leading to ribosome degradation) during starvation. This Geotalea daltonii (strain DSM 22248 / JCM 15807 / FRC-32) (Geobacter daltonii) protein is Ribonuclease PH.